Reading from the N-terminus, the 114-residue chain is uncharacterized protein (114 aa).

The disordered stretch occupies residues 1–37 (MLKKILSLFKKEEPKTEEKPTEVEEKKEEREEKEEKK). Over residues 9 to 37 (FKKEEPKTEEKPTEVEEKKEEREEKEEKK) the composition is skewed to basic and acidic residues.

This is an uncharacterized protein from Aquifex aeolicus (strain VF5).